Consider the following 250-residue polypeptide: Triosephosphate isomerase, cytosolic (250 aa).

Substrate contacts are provided by N1 and K3. H87 functions as the Electrophile in the catalytic mechanism. E160 functions as the Proton acceptor in the catalytic mechanism.

The protein belongs to the triosephosphate isomerase family. Homodimer.

The protein resides in the cytoplasm. The enzyme catalyses D-glyceraldehyde 3-phosphate = dihydroxyacetone phosphate. It participates in carbohydrate biosynthesis; gluconeogenesis. Its pathway is carbohydrate degradation; glycolysis; D-glyceraldehyde 3-phosphate from glycerone phosphate: step 1/1. The polypeptide is Triosephosphate isomerase, cytosolic (TPI1) (Gracilaria gracilis (Red alga)).